A 238-amino-acid polypeptide reads, in one-letter code: Thymidine kinase a (238 aa).

Residues Gly38–Ser45, Asp70–Arg72, and Asp115–Gln118 each bind ATP. Glu116 acts as the Proton acceptor in catalysis. Tyr147 lines the substrate pocket. Cys172 and Cys175 together coordinate Zn(2+). Residues Thr191–Gly195 and Tyr200 each bind substrate. Cys204 lines the Zn(2+) pocket.

The protein belongs to the thymidine kinase family. Monomer and dimer. Dimerization is stimulated by ATP. As to expression, expressed ubiquitously.

The protein localises to the cytoplasm. It carries out the reaction thymidine + ATP = dTMP + ADP + H(+). Its pathway is purine metabolism. The protein operates within pyrimidine metabolism. In terms of biological role, part of the salvage pathway for purine and pyrimidine deoxyribonucleotide synthesis. Phosphorylates preferentially purines over pyrimidines. Mediates tolerance to genotoxins, such as ultraviolet-C (UV-C) irradiation, MMC, a DNA crosslinker, and ZEO, a DNA intercalator, that induce double-strand breaks and thus contributes to several DNA repair pathways by providing deoxythymidine triphosphate that serve as precursors for DNA repair and to balance deoxyribonucleotides pools. In Arabidopsis thaliana (Mouse-ear cress), this protein is Thymidine kinase a.